The sequence spans 313 residues: tRNA dimethylallyltransferase (313 aa).

20–27 (GPTGTGKS) is an ATP binding site. 22–27 (TGTGKS) is a substrate binding site.

Belongs to the IPP transferase family. Monomer. It depends on Mg(2+) as a cofactor.

It carries out the reaction adenosine(37) in tRNA + dimethylallyl diphosphate = N(6)-dimethylallyladenosine(37) in tRNA + diphosphate. Functionally, catalyzes the transfer of a dimethylallyl group onto the adenine at position 37 in tRNAs that read codons beginning with uridine, leading to the formation of N6-(dimethylallyl)adenosine (i(6)A). This chain is tRNA dimethylallyltransferase, found in Kocuria rhizophila (strain ATCC 9341 / DSM 348 / NBRC 103217 / DC2201).